A 556-amino-acid polypeptide reads, in one-letter code: Sensory neuron membrane protein 2 (556 aa).

Over 1-6 (MIHWSL) the chain is Cytoplasmic. The chain crosses the membrane as a helical span at residues 7–27 (IVSALGVCVAVLGGYCGWILF). Over 28-522 (PNMVHKKVEQ…KLINTLKTLN (495 aa)) the chain is Extracellular. 4 N-linked (GlcNAc...) asparagine glycosylation sites follow: N66, N274, N310, and N324. 2 cysteine pairs are disulfide-bonded: C320-C388 and C349-C415. A helical transmembrane segment spans residues 523–543 (IVHWATLCGGIGVAVACLIYY). Topologically, residues 544–556 (IYQRGRVVEPPVK) are cytoplasmic.

The protein belongs to the CD36 family. As to expression, detected in the head and to a lesser extent in legs and wings.

The protein resides in the cell membrane. Functionally, plays an olfactory role that is not restricted to pheromone sensitivity. In Drosophila melanogaster (Fruit fly), this protein is Sensory neuron membrane protein 2.